We begin with the raw amino-acid sequence, 455 residues long: Bifunctional protein GlmU (455 aa).

The segment at 1–230 is pyrophosphorylase; it reads MTKRNAIILA…FDESMGVNDR (230 aa). UDP-N-acetyl-alpha-D-glucosamine-binding positions include 9–12, Lys-23, Gln-73, 78–79, 101–103, Gly-140, Glu-155, Asn-170, and Asn-228; these read LAAG, GT, and SGD. Asp-103 serves as a coordination point for Mg(2+). Residue Asn-228 coordinates Mg(2+). Residues 231 to 251 are linker; sequence VALARANKVMRNRINTHWMRE. The segment at 252 to 455 is N-acetyltransferase; sequence GVSMIDPETT…KENYAKKLPW (204 aa). Residues Arg-333 and Lys-351 each contribute to the UDP-N-acetyl-alpha-D-glucosamine site. The active-site Proton acceptor is the His-363. Residues Tyr-366 and Asn-377 each coordinate UDP-N-acetyl-alpha-D-glucosamine. Residues 386-387, Ser-405, Ala-423, and Arg-440 each bind acetyl-CoA; that span reads NY.

In the N-terminal section; belongs to the N-acetylglucosamine-1-phosphate uridyltransferase family. The protein in the C-terminal section; belongs to the transferase hexapeptide repeat family. In terms of assembly, homotrimer. The cofactor is Mg(2+).

It is found in the cytoplasm. The catalysed reaction is alpha-D-glucosamine 1-phosphate + acetyl-CoA = N-acetyl-alpha-D-glucosamine 1-phosphate + CoA + H(+). It carries out the reaction N-acetyl-alpha-D-glucosamine 1-phosphate + UTP + H(+) = UDP-N-acetyl-alpha-D-glucosamine + diphosphate. It participates in nucleotide-sugar biosynthesis; UDP-N-acetyl-alpha-D-glucosamine biosynthesis; N-acetyl-alpha-D-glucosamine 1-phosphate from alpha-D-glucosamine 6-phosphate (route II): step 2/2. Its pathway is nucleotide-sugar biosynthesis; UDP-N-acetyl-alpha-D-glucosamine biosynthesis; UDP-N-acetyl-alpha-D-glucosamine from N-acetyl-alpha-D-glucosamine 1-phosphate: step 1/1. The protein operates within bacterial outer membrane biogenesis; LPS lipid A biosynthesis. In terms of biological role, catalyzes the last two sequential reactions in the de novo biosynthetic pathway for UDP-N-acetylglucosamine (UDP-GlcNAc). The C-terminal domain catalyzes the transfer of acetyl group from acetyl coenzyme A to glucosamine-1-phosphate (GlcN-1-P) to produce N-acetylglucosamine-1-phosphate (GlcNAc-1-P), which is converted into UDP-GlcNAc by the transfer of uridine 5-monophosphate (from uridine 5-triphosphate), a reaction catalyzed by the N-terminal domain. In Limosilactobacillus reuteri (strain DSM 20016) (Lactobacillus reuteri), this protein is Bifunctional protein GlmU.